The sequence spans 282 residues: Protoheme IX farnesyltransferase (282 aa).

9 consecutive transmembrane segments (helical) span residues 9-29, 39-59, 79-99, 102-122, 139-159, 165-185, 210-230, 231-251, and 261-281; these read LAKP…FLLA, LPLF…GCVF, LVTG…LLIL, LVLY…GFIV, VLGG…VVNI, LALF…IAML, IMLF…VLGS, ADLF…YKSI, and VFAK…CLTM.

The protein belongs to the UbiA prenyltransferase family. Protoheme IX farnesyltransferase subfamily.

It is found in the cell inner membrane. It carries out the reaction heme b + (2E,6E)-farnesyl diphosphate + H2O = Fe(II)-heme o + diphosphate. Its pathway is porphyrin-containing compound metabolism; heme O biosynthesis; heme O from protoheme: step 1/1. Its function is as follows. Converts heme B (protoheme IX) to heme O by substitution of the vinyl group on carbon 2 of heme B porphyrin ring with a hydroxyethyl farnesyl side group. This is Protoheme IX farnesyltransferase from Francisella tularensis subsp. holarctica (strain LVS).